The primary structure comprises 793 residues: Protein translocase subunit SecA 2 (793 aa).

ATP contacts are provided by residues Q77, 95–99, and D493; that span reads GEGKT.

The protein belongs to the SecA family. Monomer and homodimer. Part of the essential Sec protein translocation apparatus which comprises SecA, SecYEG and auxiliary proteins SecDF. Other proteins may also be involved.

It is found in the cell membrane. It localises to the cytoplasm. The enzyme catalyses ATP + H2O + cellular proteinSide 1 = ADP + phosphate + cellular proteinSide 2.. Its function is as follows. Part of the Sec protein translocase complex. Interacts with the SecYEG preprotein conducting channel. Has a central role in coupling the hydrolysis of ATP to the transfer of proteins into and across the cell membrane, serving as an ATP-driven molecular motor driving the stepwise translocation of polypeptide chains across the membrane. In Streptococcus sanguinis (strain SK36), this protein is Protein translocase subunit SecA 2.